The primary structure comprises 122 residues: HLLQFNKMIKFETRKNAVPFYAFYGCYCGWGGQGRPKDATDRCCFVHDCCYGKLAKCNTKWDIYRYSLKSGYITCGKGTWCEEQICECDRVAAECLRRSLSTYKNGYMFYPDSRCRGPSETC.

Cystine bridges form between cysteine 26–cysteine 115, cysteine 28–cysteine 44, cysteine 43–cysteine 95, cysteine 49–cysteine 122, cysteine 50–cysteine 88, cysteine 57–cysteine 81, and cysteine 75–cysteine 86. Ca(2+) is bound by residues tyrosine 27, glycine 29, and glycine 31. Histidine 47 is an active-site residue. Aspartate 48 provides a ligand contact to Ca(2+). Aspartate 89 is an active-site residue.

Belongs to the phospholipase A2 family. Group II subfamily. D49 sub-subfamily. As to quaternary structure, heterodimer of one of the acidic (CA1, CA2, CA3 or CA4) and one of the basic (CBa1, CBa2, CBb, CBc or CBd) subunits; non-covalently linked. The acidic subunit is non-toxic, without enzymatic activity and comprises 3 peptides that are cross-linked by 5 disulfide bridges. The basic subunit is toxic, has phospholipase A2 activity and is composed of a single chain. Multiple variants of each subunit give different crotoxin complexes that can be subdivided into 2 classes: (1) those of high toxicity, low PLA2 activity (CBb, CBc and CBd linked with high affinity to any CA) and high stability (K(d)=4.5 nM) and (2) those of moderate toxicity, high PLA2 activity (CBa2 linked with low affinity to any CA) and low stability (K(d)=25 nM). It depends on Ca(2+) as a cofactor. In terms of tissue distribution, expressed by the venom gland.

The protein localises to the secreted. The catalysed reaction is a 1,2-diacyl-sn-glycero-3-phosphocholine + H2O = a 1-acyl-sn-glycero-3-phosphocholine + a fatty acid + H(+). Functionally, heterodimer CA-CB: Crotoxin is a potent presynaptic neurotoxin that possesses phospholipase A2 (PLA2) activity and exerts a lethal action by blocking neuromuscular transmission. It consists of a non-covalent association of a basic and weakly toxic PLA2 subunit (CBa2, CBb, CBc, or CBd), with a small acidic, non-enzymatic and non-toxic subunit (CA1, CA2, CA3 or CA4). The complex acts by binding to a specific 48-kDa protein (R48) receptor located on presynaptic membranes, forming a transient ternary complex CA-CB-R48, followed by dissociation of the CA-CB complex and release of the CA subunit. At equilibrium, only the CB subunits remain associated with the specific crotoxin receptor. In addition to neurotoxicity, crotoxin has been found to exert myotoxicity, nephrotoxicity, and cardiovascular toxicity. Moreover, anti-inflammatory, immunomodulatory, anti-tumor and analgesic effects of crotoxin have also been reported. Its function is as follows. Monomer CBb: The basic subunit of crotoxin is a snake venom phospholipase A2 (PLA2) that exhibits weak neurotoxicity (10-fold less than the heterodimer) and strong anticoagulant effects by binding to factor Xa (F10) and inhibiting the prothrombinase activity. In addition, it shows the same effects described for the heterodimer and binds the nucleotide-binding domain (NBD1) of CFTR chloride channels and increases the channel current. PLA2 catalyzes the calcium-dependent hydrolysis of the 2-acyl groups in 3-sn-phosphoglycerides. The sequence is that of Phospholipase A2 crotoxin basic subunit CBb from Crotalus durissus terrificus (South American rattlesnake).